Reading from the N-terminus, the 181-residue chain is Ribonuclease HII (181 aa).

Residues 1–181 (MICGIDEVGR…NLHRRSFKFI (181 aa)) enclose the RNase H type-2 domain. 3 residues coordinate a divalent metal cation: Asp-6, Glu-7, and Asp-98.

This sequence belongs to the RNase HII family. Requires Mn(2+) as cofactor. Mg(2+) serves as cofactor.

Its subcellular location is the cytoplasm. It carries out the reaction Endonucleolytic cleavage to 5'-phosphomonoester.. Its function is as follows. Endonuclease that specifically degrades the RNA of RNA-DNA hybrids. The polypeptide is Ribonuclease HII (Borrelia hermsii (strain HS1 / DAH)).